A 374-amino-acid chain; its full sequence is Phosphate-binding protein PstS1 (374 aa).

An N-terminal signal peptide occupies residues 1 to 23; the sequence is MKIRLHTLLAVLTAAPLLLAAAG. Cys-24 carries the N-palmitoyl cysteine lipid modification. Cys-24 carries S-diacylglycerol cysteine lipidation. Residues 25 to 48 are disordered; that stretch reads GSKPPSGSPETGAGAGTVATTPAS. Phosphate contacts are provided by residues 58–60, Ser-88, Asp-106, and 189–191; these read STL and SGD.

Belongs to the PstS family. The complex is composed of two ATP-binding proteins (PstB), two transmembrane proteins (PstC and PstA) and a solute-binding protein (PstS).

The protein resides in the cell membrane. It localises to the secreted. Functions in inorganic phosphate uptake, a phosphate-binding protein, although probably not the main uptake protein under phosphate starvation. Part of the ABC transporter complex PstSACB involved in phosphate import. In terms of biological role, a host TLR2 agonist (toll-like receptor), requires both host TLR1 and TLR2 as coreceptors. This Mycobacterium bovis (strain BCG / Pasteur 1173P2) protein is Phosphate-binding protein PstS1 (pstS1).